The primary structure comprises 711 residues: Ecdysone-inducible protein E75 (711 aa).

The segment at residues 44–120 (TVLCRVCGDK…VGMSRDAVRF (77 aa)) is a DNA-binding region (nuclear receptor). 2 NR C4-type zinc fingers span residues 47 to 67 (CRVC…CEGC) and 84 to 108 (CTKN…LKKC). The NR LBD domain occupies 153–400 (DGPRLLARVV…QQMWVEDEGA (248 aa)). Disordered stretches follow at residues 405–432 (SGAD…DCGT), 466–530 (LTVT…DMPV), 559–602 (AMRR…PIRA), and 680–711 (DAPQ…MLPA). Composition is skewed to basic and acidic residues over residues 511 to 521 (SLEEHSDDRRP) and 560 to 572 (MRRD…EARP). Positions 574–590 (RPTPSPQPPHHPHPASP) are enriched in pro residues. Composition is skewed to low complexity over residues 591-602 (AHPAHSPRPIRA) and 682-692 (PQPLNLSKKSP). Over residues 693 to 711 (SPSPPPPPPRSYMPPMLPA) the composition is skewed to pro residues.

It belongs to the nuclear hormone receptor family. NR1 subfamily.

The protein localises to the nucleus. Functionally, orphan receptor possibly involved in the regulation of genes in the ecdysteroid cascade. This Galleria mellonella (Greater wax moth) protein is Ecdysone-inducible protein E75 (E75).